Reading from the N-terminus, the 84-residue chain is Small ribosomal subunit protein uS17 (84 aa).

It belongs to the universal ribosomal protein uS17 family. Part of the 30S ribosomal subunit.

One of the primary rRNA binding proteins, it binds specifically to the 5'-end of 16S ribosomal RNA. This Treponema pallidum (strain Nichols) protein is Small ribosomal subunit protein uS17.